A 179-amino-acid polypeptide reads, in one-letter code: MSRLKEKFNTEVTENLMKEFNYSSVMEVPKIDKIVVNMGVGDAVQNSKVLDNAVEELELITGQKPLITKAKKSVATFRLREGMPIGAKVTLRGDRMYEFLDKLIAVSLPRVRDFHGVSKKAFDGRGNYTLGIKEQLIFPEIDYDKVSKVRGMDIVIVTTANTDEEGRELLKQFGMPFQK.

Belongs to the universal ribosomal protein uL5 family. As to quaternary structure, part of the 50S ribosomal subunit; part of the 5S rRNA/L5/L18/L25 subcomplex. Contacts the 5S rRNA and the P site tRNA. Forms a bridge to the 30S subunit in the 70S ribosome.

Functionally, this is one of the proteins that bind and probably mediate the attachment of the 5S RNA into the large ribosomal subunit, where it forms part of the central protuberance. In the 70S ribosome it contacts protein S13 of the 30S subunit (bridge B1b), connecting the 2 subunits; this bridge is implicated in subunit movement. Contacts the P site tRNA; the 5S rRNA and some of its associated proteins might help stabilize positioning of ribosome-bound tRNAs. In Staphylococcus carnosus (strain TM300), this protein is Large ribosomal subunit protein uL5.